The following is a 421-amino-acid chain: Phosphatidylinositol 5-phosphate 4-kinase type-2 gamma (421 aa).

At Ala-2 the chain carries N-acetylalanine. Ser-26 is modified (phosphoserine). The PIPK domain occupies 43-420 (AADPLVGVFL…RFLDFIANIF (378 aa)). The segment at 69–75 (VMLLPDD) is required for interaction with PIP5K1A. A Phosphoserine modification is found at Ser-349.

Interacts with PIP5K1A; the interaction inhibits PIP5K1A kinase activity. Post-translationally, phosphorylated, phosphorylation is induced by EGF.

Its subcellular location is the endoplasmic reticulum. The protein localises to the cytoplasm. It carries out the reaction a 1,2-diacyl-sn-glycero-3-phospho-(1D-myo-inositol-5-phosphate) + ATP = a 1,2-diacyl-sn-glycero-3-phospho-(1D-myo-inositol-4,5-bisphosphate) + ADP + H(+). It catalyses the reaction 1,2-dihexadecanoyl-sn-glycero-3-phospho-(1D-myo-inositol-5-phosphate) + ATP = 1,2-dihexadecanoyl-sn-glycero-3-phospho-(1D-myo-inositol-4,5-bisphosphate) + ADP + H(+). The catalysed reaction is 1,2-dihexadecanoyl-sn-glycero-3-phospho-(1D-myo-inositol-5-phosphate) + GTP = 1,2-dihexadecanoyl-sn-glycero-3-phospho-(1D-myo-inositol-4,5-bisphosphate) + GDP + H(+). Its function is as follows. Phosphatidylinositol 5-phosphate 4-kinase with low enzymatic activity. May be a GTP sensor, has higher GTP-dependent kinase activity than ATP-dependent kinase activity. PIP4Ks negatively regulate insulin signaling through a catalytic-independent mechanism. They interact with PIP5Ks and suppress PIP5K-mediated PtdIns(4,5)P2 synthesis and insulin-dependent conversion to PtdIns(3,4,5)P3. The sequence is that of Phosphatidylinositol 5-phosphate 4-kinase type-2 gamma from Mus musculus (Mouse).